The sequence spans 419 residues: UDP-N-acetylglucosamine 1-carboxyvinyltransferase (419 aa).

22–23 (KN) contacts phosphoenolpyruvate. Arginine 91 serves as a coordination point for UDP-N-acetyl-alpha-D-glucosamine. Catalysis depends on cysteine 115, which acts as the Proton donor. Cysteine 115 bears the 2-(S-cysteinyl)pyruvic acid O-phosphothioketal mark. UDP-N-acetyl-alpha-D-glucosamine-binding positions include 120-124 (RPVDL), 160-163 (KVSV), aspartate 305, and isoleucine 327.

It belongs to the EPSP synthase family. MurA subfamily.

It localises to the cytoplasm. The catalysed reaction is phosphoenolpyruvate + UDP-N-acetyl-alpha-D-glucosamine = UDP-N-acetyl-3-O-(1-carboxyvinyl)-alpha-D-glucosamine + phosphate. It functions in the pathway cell wall biogenesis; peptidoglycan biosynthesis. Cell wall formation. Adds enolpyruvyl to UDP-N-acetylglucosamine. The protein is UDP-N-acetylglucosamine 1-carboxyvinyltransferase of Klebsiella pneumoniae subsp. pneumoniae (strain ATCC 700721 / MGH 78578).